The sequence spans 476 residues: Protein transport protein Sec61 subunit alpha (476 aa).

At 2 to 33 the chain is on the cytoplasmic side; that stretch reads GIKFLEVIKPFCAVLPEIQKPERKIQFREKVL. A helical transmembrane segment spans residues 34-53; it reads WTAITLFIFLVCCQIPLFGI. Residues 54 to 76 lie on the Lumenal side of the membrane; the sequence is MSSDSADPFYWMRVILASNRGTL. A helical transmembrane segment spans residues 77–96; sequence MELGISPIVTSGLIMQLLAG. At 97–117 the chain is on the cytoplasmic side; the sequence is AKIIEVGDTPKDRALFNGAQK. A helical membrane pass occupies residues 118-138; that stretch reads LFGMIITIGQAIVYVMTGMYG. At 139-144 the chain is on the lumenal side; it reads DPSEMG. The chain crosses the membrane as a helical span at residues 145-165; sequence AGICLLIIIQLFVAGLIVLLL. Over 166–172 the chain is Cytoplasmic; the sequence is DELLQKG. The chain crosses the membrane as a helical span at residues 173 to 193; sequence YGLGSGISLFIATNICETIVW. The Lumenal segment spans residues 194 to 240; sequence KAFSPTTVNTGRGTEFEGAIIALFHLLATRTDKVRALREAFYRQNLP. Residues 241–261 traverse the membrane as a helical segment; that stretch reads NILNLIATVFVFAVVIYFQGF. The Cytoplasmic portion of the chain corresponds to 262-288; it reads RVDLPIKSARYRGQYNTYPIKLFYTSN. The helical transmembrane segment at 289 to 309 threads the bilayer; it reads IPIILQSALVSNLYVISQMLS. Residues 310-354 lie on the Lumenal side of the membrane; the sequence is TRFSGNFLVNLLGTWSDATSGGPARAYPVAGLCYYLSPPESFGSV. The chain crosses the membrane as a helical span at residues 355 to 375; sequence LDDPVHAAIYIVFMLGSCAFF. The Cytoplasmic portion of the chain corresponds to 376-420; the sequence is SKTWIEVSGSSAKDVAKQLKEQQMVMRGHRETSMVHELNRYIPTA. The helical transmembrane segment at 421–441 threads the bilayer; the sequence is AAFGGLCIGGLSVMADFLGAI. Over 442 to 445 the chain is Lumenal; the sequence is GSGT. A helical membrane pass occupies residues 446–462; that stretch reads GILLAVTIIYQYFEIFV. At 463–476 the chain is on the cytoplasmic side; the sequence is KEQSEMGSMGALLF.

Belongs to the SecY/SEC61-alpha family. As to quaternary structure, the SEC61 channel-forming translocon complex consists of channel-forming core components SEC61A1, SEC61B and SEC61G and different auxiliary components such as SEC62 and SEC63. The SEC61 channel associates with the multi-pass translocon (MPT) complex.

It localises to the endoplasmic reticulum membrane. Its function is as follows. Component of SEC61 channel-forming translocon complex that mediates transport of signal peptide-containing precursor polypeptides across the endoplasmic reticulum (ER). Forms a ribosome receptor and a gated pore in the ER membrane, both functions required for cotranslational translocation of nascent polypeptides. May cooperate with auxiliary protein SEC62, SEC63 and HSPA5/BiP to enable post-translational transport of small presecretory proteins. The SEC61 channel is also involved in ER membrane insertion of transmembrane proteins: it mediates membrane insertion of the first few transmembrane segments of proteins, while insertion of subsequent transmembrane regions of multi-pass membrane proteins is mediated by the multi-pass translocon (MPT) complex. This chain is Protein transport protein Sec61 subunit alpha (sec61a), found in Dissostichus mawsoni (Antarctic cod).